Reading from the N-terminus, the 459-residue chain is Putative metabolite transport protein YdjK (459 aa).

At 1-25 the chain is on the cytoplasmic side; sequence MEQITKPHCGARLDRLPDCRWHSSM. A helical transmembrane segment spans residues 26–46; that stretch reads FAIVAFGLLVCWSNAVGGLIL. The Periplasmic segment spans residues 47-60; the sequence is AQLKALGWTDNSTT. The chain crosses the membrane as a helical span at residues 61–81; it reads ATFSAITTAGMFLGALVGGII. The Cytoplasmic segment spans residues 82-90; the sequence is GDKTGRRNA. The helical transmembrane segment at 91 to 111 threads the bilayer; sequence FILYEAIHIASMVVGAFSPNM. Position 112 (aspartate 112) is a topological domain, periplasmic. A helical membrane pass occupies residues 113-133; that stretch reads FLIACRFVMGVGLGALLVTLF. Residues 134-153 lie on the Cytoplasmic side of the membrane; it reads AGFTEYMPGRNRGTWSSRVS. A helical membrane pass occupies residues 154–174; that stretch reads FIGNWSYPLCSLIAMGLTPLI. At 175–181 the chain is on the periplasmic side; the sequence is SAEWNWR. The chain crosses the membrane as a helical span at residues 182–202; sequence VQLLIPAILSLIATALAWRYF. The Cytoplasmic segment spans residues 203 to 271; that stretch reads PESPRWLESR…LLKRVILGSC (69 aa). Residues 272-292 form a helical membrane-spanning segment; the sequence is VLIAMNVVQYTLINWLPTIFM. At 293 to 301 the chain is on the periplasmic side; that stretch reads TQGINLKDS. Residues 302 to 322 traverse the membrane as a helical segment; the sequence is IVLNTMSMFGAPFGIFIAMLV. Residues 323–329 are Cytoplasmic-facing; the sequence is MDKIPRK. The helical transmembrane segment at 330 to 350 threads the bilayer; that stretch reads TMGVGLLILIAVLGYIYSLQT. Residue serine 351 is a topological domain, periplasmic. A helical transmembrane segment spans residues 352–372; the sequence is MLLITLIGFFLITFVYMYVCY. Topologically, residues 373–399 are cytoplasmic; the sequence is ASAVYVPEIWPTEAKLRGSGLANAVGR. A run of 2 helical transmembrane segments spans residues 400 to 420 and 421 to 441; these read ISGIAAPYAVAVLLSSYGVTG and VFILLGAVSIIVAIAIATIGI. Over 442–459 the chain is Cytoplasmic; sequence ETKGVSVESLSIDAVANK.

The protein belongs to the major facilitator superfamily. Sugar transporter (TC 2.A.1.1) family.

The protein localises to the cell inner membrane. The protein is Putative metabolite transport protein YdjK (ydjK) of Escherichia coli (strain K12).